Consider the following 316-residue polypeptide: Acetyl-coenzyme A carboxylase carboxyl transferase subunit alpha (316 aa).

The CoA carboxyltransferase C-terminal domain maps to 36–290 (KLEQKLDSLK…KQFLVEQLHI (255 aa)).

This sequence belongs to the AccA family. In terms of assembly, acetyl-CoA carboxylase is a heterohexamer composed of biotin carboxyl carrier protein (AccB), biotin carboxylase (AccC) and two subunits each of ACCase subunit alpha (AccA) and ACCase subunit beta (AccD).

It localises to the cytoplasm. The catalysed reaction is N(6)-carboxybiotinyl-L-lysyl-[protein] + acetyl-CoA = N(6)-biotinyl-L-lysyl-[protein] + malonyl-CoA. The protein operates within lipid metabolism; malonyl-CoA biosynthesis; malonyl-CoA from acetyl-CoA: step 1/1. Component of the acetyl coenzyme A carboxylase (ACC) complex. First, biotin carboxylase catalyzes the carboxylation of biotin on its carrier protein (BCCP) and then the CO(2) group is transferred by the carboxyltransferase to acetyl-CoA to form malonyl-CoA. This chain is Acetyl-coenzyme A carboxylase carboxyl transferase subunit alpha, found in Protochlamydia amoebophila (strain UWE25).